The following is a 239-amino-acid chain: Lectin (239 aa).

2 N-linked (GlcNAc...) asparagine glycosylation sites follow: Asn-17 and Asn-113.

It belongs to the leguminous lectin family. As to quaternary structure, homodimer.

Galactose and N-acetyllactosamine specific lectin. The sequence is that of Lectin from Erythrina crista-galli (Cockspur coral tree).